Here is a 418-residue protein sequence, read N- to C-terminus: Tryptophan synthase beta chain (418 aa).

The span at 1-12 (MTSTLPTANTPD) shows a compositional bias: polar residues. The disordered stretch occupies residues 1–21 (MTSTLPTANTPDPASLMPSVR). The residue at position 111 (Lys111) is an N6-(pyridoxal phosphate)lysine.

The protein belongs to the TrpB family. As to quaternary structure, tetramer of two alpha and two beta chains. Requires pyridoxal 5'-phosphate as cofactor.

It catalyses the reaction (1S,2R)-1-C-(indol-3-yl)glycerol 3-phosphate + L-serine = D-glyceraldehyde 3-phosphate + L-tryptophan + H2O. Its pathway is amino-acid biosynthesis; L-tryptophan biosynthesis; L-tryptophan from chorismate: step 5/5. Functionally, the beta subunit is responsible for the synthesis of L-tryptophan from indole and L-serine. The sequence is that of Tryptophan synthase beta chain from Synechococcus sp. (strain CC9311).